Consider the following 409-residue polypeptide: D-galactonate dehydratase family member Achl_0790 (409 aa).

A Mg(2+)-binding site is contributed by Asp-217. D-arabinonate is bound at residue His-219. Positions 243 and 269 each coordinate Mg(2+). D-arabinonate contacts are provided by Glu-269, Arg-290, His-319, and Glu-346.

Belongs to the mandelate racemase/muconate lactonizing enzyme family. GalD subfamily.

Its function is as follows. Has no detectable activity with D-mannonate and with a panel of 70 other acid sugars (in vitro), in spite of the conservation of the residues that are expected to be important for catalytic activity and cofactor binding. May have evolved a divergent function. This chain is D-galactonate dehydratase family member Achl_0790, found in Pseudarthrobacter chlorophenolicus (strain ATCC 700700 / DSM 12829 / CIP 107037 / JCM 12360 / KCTC 9906 / NCIMB 13794 / A6) (Arthrobacter chlorophenolicus).